A 688-amino-acid polypeptide reads, in one-letter code: Polyribonucleotide nucleotidyltransferase (688 aa).

Asp484 and Asp490 together coordinate Mg(2+). The KH domain maps to 550–609 (PTTEIFNVAPDKIVEIIGQGGRVIKEIVEKFEVKIDLNKPSGEVKIMGNKERVLKTKEFI). In terms of domain architecture, S1 motif spans 626 to 688 (DEVLEAQVKR…NKGKIALDLA (63 aa)).

Belongs to the polyribonucleotide nucleotidyltransferase family. The cofactor is Mg(2+).

It localises to the cytoplasm. It carries out the reaction RNA(n+1) + phosphate = RNA(n) + a ribonucleoside 5'-diphosphate. Involved in mRNA degradation. Catalyzes the phosphorolysis of single-stranded polyribonucleotides processively in the 3'- to 5'-direction. This Helicobacter pylori (strain P12) protein is Polyribonucleotide nucleotidyltransferase.